Consider the following 197-residue polypeptide: MFDRELEAFGFEKTDDLIKIVPPDLFAELCQQSVQHLQRQRSGVDCQVIFQSFQAAGVLISEDELRKIIRWITTLFSTAAKYNVTCEELLSRLISKLPKQILQVIRHVWNEEGKRLSELEKSRDLLPSGELVDFQWKIGMAVSSDSCRSLNHPYVTIELKVADYSGQITSKVFELTIPEFQNFHKQVKEMSSVLETV.

The COMM domain maps to 130–197 (ELVDFQWKIG…KEMSSVLETV (68 aa)).

This sequence belongs to the COMM domain-containing protein 6 family. In terms of assembly, component of the commander complex consisting of the CCC subcomplex and the retriever subcomplex. Component of the CCC subcomplex.

It localises to the nucleus. The protein resides in the cytoplasm. Scaffold protein in the commander complex that is essential for endosomal recycling of transmembrane cargos; the commander complex is composed of the CCC subcomplex and the retriever subcomplex. May modulate activity of cullin-RING E3 ubiquitin ligase (CRL) complexes. Down-regulates activation of NF-kappa-B. Inhibits TNF-induced NFKB1 activation. The chain is COMM domain-containing protein 6 (commd6) from Xenopus tropicalis (Western clawed frog).